The following is a 298-amino-acid chain: Osmoprotective compounds uptake permease protein GgtD (298 aa).

7 helical membrane passes run 26–46 (IHIAILTIAFIWTLPSLGLFI), 97–117 (IAVPATVIPIAIATFAAYAFA), 126–146 (LLFILVVCLLVVPLQTTLIPV), 158–178 (TFLGVWLAHTAYGLPLGIYLL), 207–227 (LIVPLSMPAIASFAVFQFLWV), 231–251 (LLVALVYLGGTADVAPVTIQL), and 263–283 (YLLTAGAFISMIVPLMVFFGL). Residues 91-283 (FLNSLTIAVP…IVPLMVFFGL (193 aa)) form the ABC transmembrane type-1 domain.

The protein belongs to the binding-protein-dependent transport system permease family. In terms of assembly, the complex is composed of two ATP-binding proteins (GgtA), two transmembrane proteins (GgtC and GgtD) and a solute-binding protein (GgtB).

The protein resides in the cell membrane. In terms of biological role, part of the ABC transporter complex GgtABCD involved in the uptake of the osmoprotective compounds glucosylglycerol (GG), sucrose and trehalose. Responsible for the translocation of the substrate across the membrane. The chain is Osmoprotective compounds uptake permease protein GgtD from Synechocystis sp. (strain ATCC 27184 / PCC 6803 / Kazusa).